The primary structure comprises 131 residues: Large ribosomal subunit protein eL32 (131 aa).

Belongs to the eukaryotic ribosomal protein eL32 family. In terms of assembly, component of the large ribosomal subunit (LSU). Mature N.crassa ribosomes consist of a small (40S) and a large (60S) subunit. The 40S small subunit contains 1 molecule of ribosomal RNA (18S rRNA) and at least 32 different proteins. The large 60S subunit contains 3 rRNA molecules (26S, 5.8S and 5S rRNA) and at least 42 different proteins.

Its subcellular location is the cytoplasm. Functionally, component of the ribosome, a large ribonucleoprotein complex responsible for the synthesis of proteins in the cell. The small ribosomal subunit (SSU) binds messenger RNAs (mRNAs) and translates the encoded message by selecting cognate aminoacyl-transfer RNA (tRNA) molecules. The large subunit (LSU) contains the ribosomal catalytic site termed the peptidyl transferase center (PTC), which catalyzes the formation of peptide bonds, thereby polymerizing the amino acids delivered by tRNAs into a polypeptide chain. The nascent polypeptides leave the ribosome through a tunnel in the LSU and interact with protein factors that function in enzymatic processing, targeting, and the membrane insertion of nascent chains at the exit of the ribosomal tunnel. The polypeptide is Large ribosomal subunit protein eL32 (crp-63) (Neurospora crassa (strain ATCC 24698 / 74-OR23-1A / CBS 708.71 / DSM 1257 / FGSC 987)).